The sequence spans 408 residues: LL-diaminopimelate aminotransferase (408 aa).

Substrate is bound by residues tyrosine 15 and glycine 42. Pyridoxal 5'-phosphate-binding positions include tyrosine 72, 108-109 (SK), tyrosine 132, asparagine 187, tyrosine 218, and 246-248 (SFS). The substrate site is built by lysine 109, tyrosine 132, and asparagine 187. Lysine 249 is modified (N6-(pyridoxal phosphate)lysine). Arginine 257 and asparagine 292 together coordinate pyridoxal 5'-phosphate. Asparagine 292 and arginine 388 together coordinate substrate.

It belongs to the class-I pyridoxal-phosphate-dependent aminotransferase family. LL-diaminopimelate aminotransferase subfamily. As to quaternary structure, homodimer. Pyridoxal 5'-phosphate is required as a cofactor.

It catalyses the reaction (2S,6S)-2,6-diaminopimelate + 2-oxoglutarate = (S)-2,3,4,5-tetrahydrodipicolinate + L-glutamate + H2O + H(+). Its pathway is amino-acid biosynthesis; L-lysine biosynthesis via DAP pathway; LL-2,6-diaminopimelate from (S)-tetrahydrodipicolinate (aminotransferase route): step 1/1. Involved in the synthesis of meso-diaminopimelate (m-DAP or DL-DAP), required for both lysine and peptidoglycan biosynthesis. Catalyzes the direct conversion of tetrahydrodipicolinate to LL-diaminopimelate. This Leptospira biflexa serovar Patoc (strain Patoc 1 / Ames) protein is LL-diaminopimelate aminotransferase.